The primary structure comprises 404 residues: Phosphopentomutase (404 aa).

D10, D303, H308, D344, H345, and H356 together coordinate Mn(2+).

Belongs to the phosphopentomutase family. Mn(2+) serves as cofactor.

It is found in the cytoplasm. The catalysed reaction is 2-deoxy-alpha-D-ribose 1-phosphate = 2-deoxy-D-ribose 5-phosphate. It catalyses the reaction alpha-D-ribose 1-phosphate = D-ribose 5-phosphate. The protein operates within carbohydrate degradation; 2-deoxy-D-ribose 1-phosphate degradation; D-glyceraldehyde 3-phosphate and acetaldehyde from 2-deoxy-alpha-D-ribose 1-phosphate: step 1/2. Isomerase that catalyzes the conversion of deoxy-ribose 1-phosphate (dRib-1-P) and ribose 1-phosphate (Rib-1-P) to deoxy-ribose 5-phosphate (dRib-5-P) and ribose 5-phosphate (Rib-5-P), respectively. In Shewanella putrefaciens (strain CN-32 / ATCC BAA-453), this protein is Phosphopentomutase.